A 201-amino-acid polypeptide reads, in one-letter code: Cold shock domain-containing protein 4 (201 aa).

An N-acetylserine modification is found at S2. In terms of domain architecture, CSD spans 14–81; that stretch reads RRKGTVKWFD…RPKAIEVSGP (68 aa). Residues 66–109 are disordered; the sequence is EVDNSGRPKAIEVSGPDGAPVQGNSGGGGSSGGRGGFGGGGGRG. Over residues 89–109 the composition is skewed to gly residues; that stretch reads NSGGGGSSGGRGGFGGGGGRG. CCHC-type zinc fingers lie at residues 136–153 and 180–197; these read NSCFKCGEPGHMARECSQ and LSCYSCGESGHFARDCTS.

The protein belongs to the cold shock protein (CSP) family. Mostly expressed in shoot apices and siliques, and, to a lower extent, in roots, cotyledons, stems, shoots, leaves, floral buds and flowers. Present in shoot apical meristems and siliques (at protein level). Very low levels are observed in cv. Landsberg erecta compared to cv. Columbia.

It is found in the cytoplasm. The protein resides in the nucleus. It localises to the nucleolus. Functionally, chaperone that binds to and unwinds RNA and both single-stranded DNA and double-stranded DNA (ssDNA and dsDNA DNA). Regulates the flowering transition and flower and seed development, particularly at late stages of embryo development, through regulation of gene expression (including MEA, FIS2, AP1, CAL, AG and SHP2). In Arabidopsis thaliana (Mouse-ear cress), this protein is Cold shock domain-containing protein 4 (CSP4).